We begin with the raw amino-acid sequence, 329 residues long: DNA-directed RNA polymerase subunit alpha (329 aa).

Residues 1–234 (MQGSVTEFLK…EQLDAFVELR (234 aa)) form an alpha N-terminal domain (alpha-NTD) region. The tract at residues 248 to 329 (FDPILLRPVD…WPPASLADDL (82 aa)) is alpha C-terminal domain (alpha-CTD).

It belongs to the RNA polymerase alpha chain family. Homodimer. The RNAP catalytic core consists of 2 alpha, 1 beta, 1 beta' and 1 omega subunit. When a sigma factor is associated with the core the holoenzyme is formed, which can initiate transcription.

It catalyses the reaction RNA(n) + a ribonucleoside 5'-triphosphate = RNA(n+1) + diphosphate. Its function is as follows. DNA-dependent RNA polymerase catalyzes the transcription of DNA into RNA using the four ribonucleoside triphosphates as substrates. In Shewanella putrefaciens (strain CN-32 / ATCC BAA-453), this protein is DNA-directed RNA polymerase subunit alpha.